The chain runs to 164 residues: ATP synthase subunit b 2 (164 aa).

A helical transmembrane segment spans residues T4–P24.

This sequence belongs to the ATPase B chain family. F-type ATPases have 2 components, F(1) - the catalytic core - and F(0) - the membrane proton channel. F(1) has five subunits: alpha(3), beta(3), gamma(1), delta(1), epsilon(1). F(0) has three main subunits: a(1), b(2) and c(10-14). The alpha and beta chains form an alternating ring which encloses part of the gamma chain. F(1) is attached to F(0) by a central stalk formed by the gamma and epsilon chains, while a peripheral stalk is formed by the delta and b chains.

It localises to the cell inner membrane. Its function is as follows. F(1)F(0) ATP synthase produces ATP from ADP in the presence of a proton or sodium gradient. F-type ATPases consist of two structural domains, F(1) containing the extramembraneous catalytic core and F(0) containing the membrane proton channel, linked together by a central stalk and a peripheral stalk. During catalysis, ATP synthesis in the catalytic domain of F(1) is coupled via a rotary mechanism of the central stalk subunits to proton translocation. In terms of biological role, component of the F(0) channel, it forms part of the peripheral stalk, linking F(1) to F(0). The polypeptide is ATP synthase subunit b 2 (Bartonella henselae (strain ATCC 49882 / DSM 28221 / CCUG 30454 / Houston 1) (Rochalimaea henselae)).